Consider the following 72-residue polypeptide: MLVITRKKGESLLIGDDIEITVVKLDDGSVKLAIDAPKNLTILRKELYNEVQEENKKATNFNPSILKNIKSK.

This sequence belongs to the CsrA/RsmA family. In terms of assembly, homodimer; the beta-strands of each monomer intercalate to form a hydrophobic core, while the alpha-helices form wings that extend away from the core.

Its subcellular location is the cytoplasm. A translational regulator that binds mRNA to regulate translation initiation and/or mRNA stability. Usually binds in the 5'-UTR at or near the Shine-Dalgarno sequence preventing ribosome-binding, thus repressing translation. Its main target seems to be the major flagellin gene, while its function is anatagonized by FliW. The chain is Translational regulator CsrA from Clostridium botulinum (strain ATCC 19397 / Type A).